A 458-amino-acid polypeptide reads, in one-letter code: Ammonium transporter Rh type B (458 aa).

The Cytoplasmic portion of the chain corresponds to 1–13 (MAGSPSRAAGRRL). The chain crosses the membrane as a helical span at residues 14–34 (QLPLLCLFLQGATAVLFAVFV). The Extracellular segment spans residues 35–61 (RYNHKTDAALWHRSNHSNADNEFYFRY). Asn-49 is a glycosylation site (N-linked (GlcNAc...) asparagine). A helical membrane pass occupies residues 62–82 (PSFQDVHAMVFVGFGFLMVFL). At 83 to 86 (QRYG) the chain is on the cytoplasmic side. A helical transmembrane segment spans residues 87 to 107 (FSSVGFTFLLAAFALQWSTLV). Over 108 to 124 (QGFLHSFHGGHIHVGVE) the chain is Extracellular. A helical membrane pass occupies residues 125-145 (SMINADFCAGAVLISFGAVLG). Topologically, residues 146 to 149 (KTGP) are cytoplasmic. Residues 150–170 (TQLLLMALLEVVLFGINEFVL) form a helical membrane-spanning segment. The Extracellular segment spans residues 171–178 (LHLLGVRD). A helical transmembrane segment spans residues 179–201 (AGGSMTIHTFGAYFGLVLSRVLY). Residues 202 to 219 (RPQLEKSKHRQGSVYHSD) lie on the Cytoplasmic side of the membrane. A helical transmembrane segment spans residues 220-240 (LFAMIGTIFLWIFWPSFNAAL). The Extracellular segment spans residues 241-251 (TALGAGQHRTA). A helical transmembrane segment spans residues 252-272 (LNTYYSLAASTLGTFALSALV). At 273-282 (GEDGRLDMVH) the chain is on the cytoplasmic side. A helical membrane pass occupies residues 283 to 303 (IQNAALAGGVVVGTSSEMMLT). Position 304 (Pro-304) is a topological domain, extracellular. The chain crosses the membrane as a helical span at residues 305–325 (FGALAAGFLAGTVSTLGYKFF). Over 326 to 346 (TPILESKFKVQDTCGVHNLHG) the chain is Cytoplasmic. Residues 347 to 367 (MPGVLGALLGVLVAGLATHEA) form a helical membrane-spanning segment. The Extracellular portion of the chain corresponds to 368 to 393 (YGDGLESVFPLIAEGQRSATSQAMHQ). Residues 394–414 (LFGLFVTLMFASVGGGLGGLL) traverse the membrane as a helical segment. The Cytoplasmic portion of the chain corresponds to 415 to 458 (LKLPFLDSPPDSQHYEDQVHWQVPGEHEDKAQRPLRVEEADTQA). The tract at residues 416–424 (KLPFLDSPP) is interaction with ANK3. Residues 436 to 458 (QVPGEHEDKAQRPLRVEEADTQA) are disordered.

Belongs to the ammonium transporter (TC 2.A.49) family. Rh subfamily. In terms of assembly, interacts (via C-terminus) with ANK2 and ANK3; required for targeting to the basolateral membrane. In terms of processing, N-glycosylated. Specifically expressed in kidney. Also detected in liver and ovary.

The protein resides in the cell membrane. It localises to the basolateral cell membrane. The catalysed reaction is NH4(+)(in) = NH4(+)(out). The enzyme catalyses methylamine(out) = methylamine(in). It catalyses the reaction CO2(out) = CO2(in). Its function is as follows. Ammonium transporter involved in the maintenance of acid-base homeostasis. Transports ammonium and its related derivative methylammonium across the basolateral plasma membrane of epithelial cells likely contributing to renal transepithelial ammonia transport and ammonia metabolism. May transport either NH4(+) or NH3 ammonia species predominantly mediating an electrogenic NH4(+) transport. May act as a CO2 channel providing for renal acid secretion. The polypeptide is Ammonium transporter Rh type B (Homo sapiens (Human)).